The primary structure comprises 188 residues: Threonylcarbamoyl-AMP synthase (188 aa).

The region spanning 3 to 188 (QLHPSDIKDI…RSGKILRNGQ (186 aa)) is the YrdC-like domain.

It belongs to the SUA5 family. TsaC subfamily.

The protein resides in the cytoplasm. It carries out the reaction L-threonine + hydrogencarbonate + ATP = L-threonylcarbamoyladenylate + diphosphate + H2O. Functionally, required for the formation of a threonylcarbamoyl group on adenosine at position 37 (t(6)A37) in tRNAs that read codons beginning with adenine. Catalyzes the conversion of L-threonine, HCO(3)(-)/CO(2) and ATP to give threonylcarbamoyl-AMP (TC-AMP) as the acyladenylate intermediate, with the release of diphosphate. This chain is Threonylcarbamoyl-AMP synthase, found in Shewanella baltica (strain OS195).